The following is a 122-amino-acid chain: Large ribosomal subunit protein uL14 (122 aa).

The protein belongs to the universal ribosomal protein uL14 family. As to quaternary structure, part of the 50S ribosomal subunit. Forms a cluster with proteins L3 and L19. In the 70S ribosome, L14 and L19 interact and together make contacts with the 16S rRNA in bridges B5 and B8.

Binds to 23S rRNA. Forms part of two intersubunit bridges in the 70S ribosome. This Polynucleobacter asymbioticus (strain DSM 18221 / CIP 109841 / QLW-P1DMWA-1) (Polynucleobacter necessarius subsp. asymbioticus) protein is Large ribosomal subunit protein uL14.